A 257-amino-acid chain; its full sequence is tRNA pseudouridine synthase A (257 aa).

Aspartate 53 serves as the catalytic Nucleophile. Tyrosine 111 contacts substrate.

This sequence belongs to the tRNA pseudouridine synthase TruA family. As to quaternary structure, homodimer.

It carries out the reaction uridine(38/39/40) in tRNA = pseudouridine(38/39/40) in tRNA. Its function is as follows. Formation of pseudouridine at positions 38, 39 and 40 in the anticodon stem and loop of transfer RNAs. The protein is tRNA pseudouridine synthase A of Xylella fastidiosa (strain M12).